Here is a 630-residue protein sequence, read N- to C-terminus: Plastin-1 (630 aa).

An N-acetylmethionine modification is found at Met1. EF-hand domains are found at residues Glu11–Pro46 and Lys51–Lys86. Ca(2+)-binding residues include Asp24, Asp26, Ser28, Tyr30, Glu35, Asp64, Asn66, Asp68, Arg70, and Glu75. Actin-binding stretches follow at residues Thr108–Lys381 and Pro382–Leu626. 4 Calponin-homology (CH) domains span residues Glu122–Leu238, Leu266–Pro377, Ser396–Thr505, and Lys517–Leu626.

As to quaternary structure, monomer. Post-translationally, phosphorylated.

Its subcellular location is the cytoplasm. The protein resides in the cell projection. It is found in the stereocilium. Functionally, actin-bundling protein. In the inner ear, it is required for stereocilia formation. Mediates liquid packing of actin filaments that is necessary for stereocilia to grow to their proper dimensions. The polypeptide is Plastin-1 (PLS1) (Bos taurus (Bovine)).